The following is a 314-amino-acid chain: Carbamate kinase (314 aa).

This sequence belongs to the carbamate kinase family. Homodimer.

It carries out the reaction hydrogencarbonate + NH4(+) + ATP = carbamoyl phosphate + ADP + H2O + H(+). The protein operates within metabolic intermediate metabolism; carbamoyl phosphate degradation; CO(2) and NH(3) from carbamoyl phosphate: step 1/1. The polypeptide is Carbamate kinase (CBK) (Trichomonas vaginalis).